A 515-amino-acid polypeptide reads, in one-letter code: 2-isopropylmalate synthase (515 aa).

One can recognise a Pyruvate carboxyltransferase domain in the interval 5-267; that stretch reads VIIFDTTLRD…STGIKHEEIH (263 aa). The Mn(2+) site is built by Asp14, His202, His204, and Asn238. The segment at 392–515 is regulatory domain; that stretch reads KLNYLSVQSG…EMKQKKIATV (124 aa).

It belongs to the alpha-IPM synthase/homocitrate synthase family. LeuA type 1 subfamily. Homodimer. Mn(2+) serves as cofactor.

The protein resides in the cytoplasm. It catalyses the reaction 3-methyl-2-oxobutanoate + acetyl-CoA + H2O = (2S)-2-isopropylmalate + CoA + H(+). It functions in the pathway amino-acid biosynthesis; L-leucine biosynthesis; L-leucine from 3-methyl-2-oxobutanoate: step 1/4. Its function is as follows. Catalyzes the condensation of the acetyl group of acetyl-CoA with 3-methyl-2-oxobutanoate (2-ketoisovalerate) to form 3-carboxy-3-hydroxy-4-methylpentanoate (2-isopropylmalate). The protein is 2-isopropylmalate synthase of Vibrio parahaemolyticus serotype O3:K6 (strain RIMD 2210633).